A 428-amino-acid chain; its full sequence is Histidine--tRNA ligase (428 aa).

The protein belongs to the class-II aminoacyl-tRNA synthetase family. Homodimer.

Its subcellular location is the cytoplasm. It catalyses the reaction tRNA(His) + L-histidine + ATP = L-histidyl-tRNA(His) + AMP + diphosphate + H(+). The protein is Histidine--tRNA ligase of Bordetella pertussis (strain Tohama I / ATCC BAA-589 / NCTC 13251).